We begin with the raw amino-acid sequence, 476 residues long: 3-isopropylmalate dehydratase large subunit (476 aa).

[4Fe-4S] cluster-binding residues include cysteine 347, cysteine 407, and cysteine 410. Residues 418–442 (LAPGERSASTSNRNFEGRQGKGGRT) form a disordered region.

The protein belongs to the aconitase/IPM isomerase family. LeuC type 1 subfamily. Heterodimer of LeuC and LeuD. Requires [4Fe-4S] cluster as cofactor.

The catalysed reaction is (2R,3S)-3-isopropylmalate = (2S)-2-isopropylmalate. It functions in the pathway amino-acid biosynthesis; L-leucine biosynthesis; L-leucine from 3-methyl-2-oxobutanoate: step 2/4. Functionally, catalyzes the isomerization between 2-isopropylmalate and 3-isopropylmalate, via the formation of 2-isopropylmaleate. The chain is 3-isopropylmalate dehydratase large subunit from Streptomyces coelicolor (strain ATCC BAA-471 / A3(2) / M145).